The following is a 163-amino-acid chain: Nucleotide-binding protein BcerKBAB4_1061 (163 aa).

The protein belongs to the YajQ family.

Functionally, nucleotide-binding protein. This Bacillus mycoides (strain KBAB4) (Bacillus weihenstephanensis) protein is Nucleotide-binding protein BcerKBAB4_1061.